The chain runs to 194 residues: Adenylate kinase (194 aa).

ATP is bound at residue 8 to 16 (GIPGVGKST).

It belongs to the archaeal adenylate kinase family. Homotrimer.

It localises to the cytoplasm. It catalyses the reaction AMP + ATP = 2 ADP. The sequence is that of Adenylate kinase (adkA) from Sulfolobus acidocaldarius (strain ATCC 33909 / DSM 639 / JCM 8929 / NBRC 15157 / NCIMB 11770).